The sequence spans 165 residues: Lipoprotein signal peptidase (165 aa).

Helical transmembrane passes span 9–29 (SFLW…YFVV), 65–85 (WQKY…CYFL), and 100–120 (ALII…GFVV). Active-site residues include Asp-121 and Asp-139. Residues 134 to 154 (VFNVADIAISLGAGLMILDAF) form a helical membrane-spanning segment.

The protein belongs to the peptidase A8 family.

The protein resides in the cell inner membrane. The catalysed reaction is Release of signal peptides from bacterial membrane prolipoproteins. Hydrolyzes -Xaa-Yaa-Zaa-|-(S,diacylglyceryl)Cys-, in which Xaa is hydrophobic (preferably Leu), and Yaa (Ala or Ser) and Zaa (Gly or Ala) have small, neutral side chains.. It functions in the pathway protein modification; lipoprotein biosynthesis (signal peptide cleavage). In terms of biological role, this protein specifically catalyzes the removal of signal peptides from prolipoproteins. The protein is Lipoprotein signal peptidase of Pasteurella multocida (strain Pm70).